The sequence spans 552 residues: Cation/acetate symporter ActP (552 aa).

Helical transmembrane passes span 5 to 25, 35 to 55, 78 to 98, 105 to 125, 151 to 171, 185 to 205, 208 to 228, 264 to 284, 305 to 325, 357 to 377, 407 to 427, 431 to 451, 466 to 486, and 499 to 519; these read FMMLFGLLTLPVLAWAADALT, IQAIVMFLLFVGGTLYITYWA, GLAIAGDYMSAASFLGISALV, GLIYSLGFLVGWPIILFLIAE, LSACGSLVVVALYLIAQMVGA, VAVILVGILMVMYVMFGGMLA, WVQIIKAVLLLFGATFMAVMV, ISALSLGLGLMFGTAGLPHIL, GFMGYFYFLTFIIGFGAILLV, FFLGFISAVAFATILAVVAGL, VSKITVLVLGVVAISLGILFE, IAFMVGLAFSIAASCNFPIII, IGGWAGLLTAVILMILGPTIW, and YDYPALFSMLVAFIGIWFFSI.

It belongs to the sodium:solute symporter (SSF) (TC 2.A.21) family.

The protein resides in the cell inner membrane. In terms of biological role, transports acetate. This Pectobacterium carotovorum subsp. carotovorum (strain PC1) protein is Cation/acetate symporter ActP.